The sequence spans 211 residues: Large ribosomal subunit protein uL4 (211 aa).

Positions 40 to 87 are disordered; sequence QQAHTRQGTASTLTRSEVRGGGRKPYKQKGTGRARQGSIRTPLRPGGG. Over residues 41–54 the composition is skewed to polar residues; it reads QAHTRQGTASTLTR. The span at 60–71 shows a compositional bias: basic residues; it reads GGRKPYKQKGTG.

This sequence belongs to the universal ribosomal protein uL4 family. Part of the 50S ribosomal subunit.

Its function is as follows. One of the primary rRNA binding proteins, this protein initially binds near the 5'-end of the 23S rRNA. It is important during the early stages of 50S assembly. It makes multiple contacts with different domains of the 23S rRNA in the assembled 50S subunit and ribosome. Forms part of the polypeptide exit tunnel. The sequence is that of Large ribosomal subunit protein uL4 from Synechococcus sp. (strain WH7803).